We begin with the raw amino-acid sequence, 155 residues long: Large ribosomal subunit protein uL13 (155 aa).

Belongs to the universal ribosomal protein uL13 family. In terms of assembly, part of the 50S ribosomal subunit.

This protein is one of the early assembly proteins of the 50S ribosomal subunit, although it is not seen to bind rRNA by itself. It is important during the early stages of 50S assembly. This chain is Large ribosomal subunit protein uL13, found in Rickettsia akari (strain Hartford).